We begin with the raw amino-acid sequence, 249 residues long: MSKHSHFRDKKMFQKKAEQFKKFQERISVQFQNEKLLYQAFTHSSYVNEHRKKPYEDNERLEFLGDAVLELTISQFLYAKYPAMSEGDLTKLRAAIVCEPSLVSLAHELSFGELVLLGKGEEMTGGRKRPALLADVFEAFIGALYLDQGLEAVVTFLKAYVFPKIDDGAFSHVMDFKSQLQEFVQRDGRGILEYKILQEKGPAHNREFEANVSLKGEVLGVGSGRSKKEAEQHAAQEALAKLQKHHMKQ.

An RNase III domain is found at 20-149 (FKKFQERISV…FIGALYLDQG (130 aa)). Glu62 lines the Mg(2+) pocket. Asp66 is a catalytic residue. Mg(2+) is bound by residues Asp135 and Glu138. Residue Glu138 is part of the active site. A DRBM domain is found at 175–244 (DFKSQLQEFV…AQEALAKLQK (70 aa)). The interval 225 to 249 (RSKKEAEQHAAQEALAKLQKHHMKQ) is disordered.

It belongs to the ribonuclease III family. As to quaternary structure, homodimer. The cofactor is Mg(2+).

It localises to the cytoplasm. It catalyses the reaction Endonucleolytic cleavage to 5'-phosphomonoester.. Its function is as follows. Digests double-stranded RNA. Involved in the processing of primary rRNA transcript to yield the immediate precursors to the large and small rRNAs (23S and 16S). Processes some mRNAs, and tRNAs when they are encoded in the rRNA operon. Processes pre-crRNA and tracrRNA of type II CRISPR loci if present in the organism. This chain is Ribonuclease 3, found in Bacillus licheniformis (strain ATCC 14580 / DSM 13 / JCM 2505 / CCUG 7422 / NBRC 12200 / NCIMB 9375 / NCTC 10341 / NRRL NRS-1264 / Gibson 46).